The primary structure comprises 1004 residues: UPF0182 protein Noca_1530 (1004 aa).

Positions 1-20 (MSELFDEAPRDPGPPARSGS) are disordered. A run of 7 helical transmembrane segments spans residues 26–46 (LIVT…FAGI), 71–91 (VLFF…IYLA), 120–140 (TWLL…SAIG), 183–203 (MAVL…YGGI), 212–232 (LSGA…LAKA), 261–281 (VLPA…LFFV), and 293–313 (VGLA…PGIV). Disordered stretches follow at residues 899–924 (GVST…PPAT) and 974–1004 (LGQK…SPSS). 2 stretches are compositionally biased toward low complexity: residues 903–916 (GPGT…QPGD) and 979–1004 (GSAG…SPSS).

It belongs to the UPF0182 family.

The protein localises to the cell membrane. The chain is UPF0182 protein Noca_1530 from Nocardioides sp. (strain ATCC BAA-499 / JS614).